Reading from the N-terminus, the 277-residue chain is Undecaprenyl-diphosphatase (277 aa).

7 helical membrane passes run 5 to 25, 44 to 64, 86 to 106, 110 to 130, 184 to 204, 219 to 239, and 255 to 275; these read WTAA…FLPI, RAMA…VWEF, LNLL…ADTI, LFNA…MLWA, AATE…AVYS, VFAI…RALL, and IAFG…WASA.

This sequence belongs to the UppP family.

The protein resides in the cell inner membrane. It catalyses the reaction di-trans,octa-cis-undecaprenyl diphosphate + H2O = di-trans,octa-cis-undecaprenyl phosphate + phosphate + H(+). In terms of biological role, catalyzes the dephosphorylation of undecaprenyl diphosphate (UPP). Confers resistance to bacitracin. In Pseudomonas savastanoi pv. phaseolicola (strain 1448A / Race 6) (Pseudomonas syringae pv. phaseolicola (strain 1448A / Race 6)), this protein is Undecaprenyl-diphosphatase.